Reading from the N-terminus, the 417-residue chain is Gap junction alpha-3 protein (417 aa).

The stretch at Gly2–Gln15 is an intramembrane region. Residues Glu16–Thr19 are Cytoplasmic-facing. The helical transmembrane segment at Val20 to Ala40 threads the bilayer. Over Ala41–Pro71 the chain is Extracellular. 3 disulfides stabilise this stretch: Cys54-Cys198, Cys61-Cys192, and Cys65-Cys187. A helical transmembrane segment spans residues Ile72–Tyr92. Over Leu93 to Asn158 the chain is Cytoplasmic. A compositionally biased stretch (basic and acidic residues) spans Glu110–Met128. Positions Glu110 to Asp141 are disordered. The helical transmembrane segment at Ile159–Phe179 threads the bilayer. Residues Gln180–Thr207 lie on the Extracellular side of the membrane. Residues Ile208–Ile228 form a helical membrane-spanning segment. The Cytoplasmic segment spans residues Tyr229 to Ile417. Disordered stretches follow at residues Asp247–Pro267 and Arg334–Ile417. The segment covering Pro342–Pro353 has biased composition (low complexity).

It belongs to the connexin family. Alpha-type (group II) subfamily. In terms of assembly, a hemichannel or connexon is composed of a hexamer of connexins. A functional gap junction is formed by the apposition of two hemichannels. Forms heteromeric channels with GJA8.

The protein resides in the cell membrane. Its subcellular location is the cell junction. It localises to the gap junction. Structural component of lens fiber gap junctions. Gap junctions are dodecameric channels that connect the cytoplasm of adjoining cells. They are formed by the docking of two hexameric hemichannels, one from each cell membrane. Small molecules and ions diffuse from one cell to a neighboring cell via the central pore. The protein is Gap junction alpha-3 protein (Gja3) of Mus musculus (Mouse).